A 1154-amino-acid chain; its full sequence is PDZ domain-containing protein 8 (1154 aa).

A helical membrane pass occupies residues 2-24; the sequence is GLLLMILASAVLGSFLTLLAQFF. Positions 66–90 are disordered; sequence DEEPSGAAPEGGATPTAAPETPAPP. Low complexity predominate over residues 70–85; that stretch reads SGAAPEGGATPTAAPE. Residues 91–294 form the SMP-LTD domain; that stretch reads TRETCYFLNA…LPNYKIRFKP (204 aa). The PDZ domain maps to 366-449; it reads TVELIKGNLQ…RVLVYYERPV (84 aa). Phosphoserine occurs at positions 496, 521, and 538. Positions 548 to 612 are disordered; it reads GSHPLPPKIQ…SADAPNQAEP (65 aa). A Phorbol-ester/DAG-type zinc finger spans residues 840 to 891; sequence KHSFQDTQFQNPTWCDYCKKKVWTKAASQCMFCAYVCHKKCQEKCLAETSVC. The disordered stretch occupies residues 955–999; that stretch reads RLSEPGTDLVEPSPKHTPNTSDNEGSDTEVCGPNSPSKRGNSTGI. 2 positions are modified to phosphoserine: serine 967 and serine 980. Residues 988 to 998 show a composition bias toward polar residues; that stretch reads NSPSKRGNSTG. The stretch at 1028–1063 forms a coiled coil; the sequence is PTEERIQKLEFMLDKLQNEIDQELEHNNSLVREEKE. A compositionally biased stretch (polar residues) spans 1132 to 1144; it reads SQLIDSQPFSSIS. The disordered stretch occupies residues 1132 to 1154; it reads SQLIDSQPFSSISDDLFGPSESV.

Interacts with MSN. As to quaternary structure, (Microbial infection) Interacts with HIV-1 Gag polyprotein p55.

It is found in the endoplasmic reticulum membrane. Molecular tethering protein that connects endoplasmic reticulum and mitochondria membranes. PDZD8-dependent endoplasmic reticulum-mitochondria membrane tethering is essential for endoplasmic reticulum-mitochondria Ca(2+) transfer. In neurons, involved in the regulation of dendritic Ca(2+) dynamics by regulating mitochondrial Ca(2+) uptake in neurons. Plays an indirect role in the regulation of cell morphology and cytoskeletal organization. May inhibit herpes simplex virus 1 infection at an early stage. This chain is PDZ domain-containing protein 8, found in Homo sapiens (Human).